Consider the following 657-residue polypeptide: MNVRAKKKPQQREMASASSGPSRSLSKGGVSRRPPLARVRVAVRLRPFMDEAKEPPCVRGIDSCSLEVANWRKYQETLKYQFDAFYGEKSTQQDVYVGSVQPILRHLLEGQNASVLAYGPTGAGKTHTMLGSPEQPGVIPRALMDLLQLTREESAEGRPWDISVAMSYLEIYQEKVLDLLDPASGDLVIREDCRGNILIPGLTQKPITSFSEFEQHFLPASRNRVVGATRLNQRSSRSHAVLLVKVEQRERLTPFRQREGKLYLIDLAGSEDNRRTGNQGIRLKESGAINTSLFVLGKVVDALNQGLPRIPYRDSKLTRLLQDSLGGSAHSILIANIAPERRFYQDTISALNFTARSKEVINRPFTNESLQPHALAPVKLPQKELLGPSEAKKAKGPEEESTGSPESTAAPASASQKLSLLQKLSNMDPAMLENLLSMERLLGSQGSQGIPLLNTPKRERMVLIKTVEEKNLEIERLKMKQKELEAKVLAQEALDPKEKENTPTILQPSSSCSGSVAKPLKKAVVMPLQRIQKQSESSNKIHLLKKGHKRKLESSHESEAVEKDEDYWEIQISPELLARGRKKLLHLLNEGSARDLRSLQRIGQKKAQLIVGWRELHGPFNEVEDLEQVEGISGKQVESFLKANLLSLAASQHSGPS.

The disordered stretch occupies residues methionine 1–arginine 33. The span at serine 16–arginine 33 shows a compositional bias: low complexity. One can recognise a Kinesin motor domain in the interval arginine 38 to valine 360. Position 119 to 126 (glycine 119 to threonine 126) interacts with ATP. A disordered region spans residues proline 388–serine 415. Positions threonine 402–serine 415 are enriched in low complexity. Phosphoserine is present on residues serine 404, serine 419, and serine 444. Lysine 457 is covalently cross-linked (Glycyl lysine isopeptide (Lys-Gly) (interchain with G-Cter in SUMO2)). The stretch at lysine 457–threonine 502 forms a coiled coil. Phosphoserine occurs at positions 537, 554, and 573.

This sequence belongs to the TRAFAC class myosin-kinesin ATPase superfamily. Kinesin family. In terms of assembly, interacts with FAM83D and SIAH1. Post-translationally, ubiquitinated; mediated by SIAH1 and leading to its subsequent proteasomal degradation.

Its subcellular location is the nucleus. The protein resides in the cytoplasm. It is found in the cytoskeleton. Kinesin family member that is involved in spindle formation and the movements of chromosomes during mitosis and meiosis. Binds to microtubules and to DNA. Plays a role in congression of laterally attached chromosomes in NDC80-depleted cells. This Rattus norvegicus (Rat) protein is Kinesin-like protein KIF22 (Kif22).